The chain runs to 481 residues: Aspartyl/glutamyl-tRNA(Asn/Gln) amidotransferase subunit B (481 aa).

It belongs to the GatB/GatE family. GatB subfamily. As to quaternary structure, heterotrimer of A, B and C subunits.

The enzyme catalyses L-glutamyl-tRNA(Gln) + L-glutamine + ATP + H2O = L-glutaminyl-tRNA(Gln) + L-glutamate + ADP + phosphate + H(+). It carries out the reaction L-aspartyl-tRNA(Asn) + L-glutamine + ATP + H2O = L-asparaginyl-tRNA(Asn) + L-glutamate + ADP + phosphate + 2 H(+). Functionally, allows the formation of correctly charged Asn-tRNA(Asn) or Gln-tRNA(Gln) through the transamidation of misacylated Asp-tRNA(Asn) or Glu-tRNA(Gln) in organisms which lack either or both of asparaginyl-tRNA or glutaminyl-tRNA synthetases. The reaction takes place in the presence of glutamine and ATP through an activated phospho-Asp-tRNA(Asn) or phospho-Glu-tRNA(Gln). The protein is Aspartyl/glutamyl-tRNA(Asn/Gln) amidotransferase subunit B of Pseudomonas fluorescens (strain Pf0-1).